The following is an 807-amino-acid chain: uncharacterized protein (807 aa).

The region spanning 281–566 (IIQSLKSEEF…DKILFLGTNI (286 aa)) is the Reverse transcriptase domain.

It localises to the mitochondrion. This is an uncharacterized protein from Schizosaccharomyces pombe (strain 972 / ATCC 24843) (Fission yeast).